The primary structure comprises 581 residues: NADH-quinone oxidoreductase subunit C/D (581 aa).

Positions 1 to 172 (MSASELVTEL…PLFNMTASLF (172 aa)) are NADH dehydrogenase I subunit C. The segment at 196-581 (ELMILNYGPH…IDYVMSDVDR (386 aa)) is NADH dehydrogenase I subunit D.

The protein in the N-terminal section; belongs to the complex I 30 kDa subunit family. In the C-terminal section; belongs to the complex I 49 kDa subunit family. NDH-1 is composed of 13 different subunits. Subunits NuoB, CD, E, F, and G constitute the peripheral sector of the complex.

It is found in the cell inner membrane. The enzyme catalyses a quinone + NADH + 5 H(+)(in) = a quinol + NAD(+) + 4 H(+)(out). Functionally, NDH-1 shuttles electrons from NADH, via FMN and iron-sulfur (Fe-S) centers, to quinones in the respiratory chain. The immediate electron acceptor for the enzyme in this species is believed to be ubiquinone. Couples the redox reaction to proton translocation (for every two electrons transferred, four hydrogen ions are translocated across the cytoplasmic membrane), and thus conserves the redox energy in a proton gradient. This is NADH-quinone oxidoreductase subunit C/D from Rhodopseudomonas palustris (strain TIE-1).